The primary structure comprises 1771 residues: Myosin-H heavy chain (1771 aa).

The Myosin N-terminal SH3-like domain occupies 7–57 (CGKEKVWVPNPEKGWINGDLIKEIPGEGWLVRDENGKEIKIEKDELRMQNP). The region spanning 61–840 (EGIDDMTSLS…IIANLELLRS (780 aa)) is the Myosin motor domain. An ATP-binding site is contributed by 154-161 (GESGAGKT). Positions 690 to 712 (LNSLMTTINSTNPHYIRCIKPNT) are actin-binding. IQ domains follow at residues 843–872 (MINSATFIQKIWRGYTDRKAYTSTKHSSIY), 866–895 (TKHSSIYFQSLIRSYLQQLEYNSMVEENSA), and 940–969 (RIKKIVKIQSLWRSNLAKKQLKLLKAEAKS). Disordered stretches follow at residues 1070–1176 (EKQH…NNVD), 1218–1282 (VKKS…PINM), and 1312–1343 (LNNGTNPATSTTNGSGNPLSQSSPTGSDKHIQ). A compositionally biased stretch (polar residues) spans 1077 to 1111 (YKNNEVVGNTSFEGSTTTNNGVTSPPKSSPASPIR). A compositionally biased stretch (low complexity) spans 1112–1139 (NSINSNSDTTISGSSDDSIDNTDSLILS). The span at 1143–1153 (HKGEDRKRNHE) shows a compositional bias: basic and acidic residues. Positions 1180–1224 (RRQFNELEKEYKELKQMDETHKQYIESLKLQITQLEEKVKKSSSH) form a coiled coil. The segment covering 1253–1281 (NSSSHHQQQQQQHNISPSNSITSTTSPIN) has biased composition (low complexity). Residues 1427–1695 (TGVLDPIETN…LTSLMDSPKY (269 aa)) enclose the Dilute domain.

Belongs to the TRAFAC class myosin-kinesin ATPase superfamily. Myosin family. Myosin I heavy chain is single-headed. Dimer of a heavy and a light chain. Inability to self-assemble into filaments.

Its function is as follows. Myosin is a protein that binds to actin and has ATPase activity that is activated by actin. This is Myosin-H heavy chain (myoH) from Dictyostelium discoideum (Social amoeba).